A 78-amino-acid chain; its full sequence is uncharacterized protein (78 aa).

The tract at residues 58–78 (EANDPEKKIPSTAAKAISLSP) is disordered.

This is an uncharacterized protein from Vaccinia virus (strain Copenhagen) (VACV).